Consider the following 134-residue polypeptide: Acyl carrier protein SF2, chloroplastic (134 aa).

The transit peptide at M1–C51 directs the protein to the chloroplast. The Carrier domain occupies P55–V130. S90 bears the O-(pantetheine 4'-phosphoryl)serine mark.

The protein belongs to the acyl carrier protein (ACP) family. 4'-phosphopantetheine is transferred from CoA to a specific serine of apo-ACP by acpS. This modification is essential for activity because fatty acids are bound in thioester linkage to the sulfhydryl of the prosthetic group.

The protein resides in the plastid. It localises to the chloroplast. The protein operates within lipid metabolism; fatty acid biosynthesis. Functionally, carrier of the growing fatty acid chain in fatty acid biosynthesis. The polypeptide is Acyl carrier protein SF2, chloroplastic (Acl1.1) (Brassica campestris (Field mustard)).